A 55-amino-acid chain; its full sequence is Large ribosomal subunit protein bL33 (55 aa).

The protein belongs to the bacterial ribosomal protein bL33 family.

The polypeptide is Large ribosomal subunit protein bL33 (Bartonella quintana (strain Toulouse) (Rochalimaea quintana)).